Consider the following 227-residue polypeptide: D-lyxose/D-mannose isomerase (227 aa).

D-fructose contacts are provided by residues Lys-90, 103–110 (HFHWRKRE), His-171, Glu-186, and Asp-193. Mn(2+) contacts are provided by His-103, His-105, Glu-110, and His-171.

Belongs to the D-lyxose ketol-isomerase family. Homodimer; disulfide-linked. Dimerization is facilitated through a disulfide bond between the two monomers of the dimeric enzyme. Mn(2+) serves as cofactor.

It carries out the reaction D-lyxose = D-xylulose. The catalysed reaction is D-mannose = D-fructose. Its function is as follows. Sugar isomerase that catalyzes the reversible isomerization of D-lyxose to D-xylulose, and D-mannose to D-fructose. Shows similar activity toward D-lyxose and D-mannose with a turnover and catalytic efficiency for D-lyxose as a substrate only 1.1- and 1.3-fold higher than those for D-mannose, respectively. Shows weaker activity with L-gulose, D-talose, L-ribose and L-allose. Overexpression enables cell growth on the rare pentose D-lyxose as the sole carbon source. The chain is D-lyxose/D-mannose isomerase from Escherichia coli O157:H7.